We begin with the raw amino-acid sequence, 255 residues long: 5'-nucleotidase SurE (255 aa).

The a divalent metal cation site is built by Asp-8, Asp-9, Ser-40, and Asn-93.

This sequence belongs to the SurE nucleotidase family. It depends on a divalent metal cation as a cofactor.

Its subcellular location is the cytoplasm. The enzyme catalyses a ribonucleoside 5'-phosphate + H2O = a ribonucleoside + phosphate. Nucleotidase that shows phosphatase activity on nucleoside 5'-monophosphates. The chain is 5'-nucleotidase SurE from Bradyrhizobium sp. (strain BTAi1 / ATCC BAA-1182).